The following is a 429-amino-acid chain: Choline kinase A2 (429 aa).

ATP contacts are provided by residues 82-88 (KGGMSNM), Arg-111, 152-158 (EYIPSRP), and Gln-257. 84–86 (GMS) contributes to the substrate binding site. Glu-258 is a Ca(2+) binding site. Asp-301 is an ATP binding site. Ca(2+) contacts are provided by Glu-320 and Ile-323.

This sequence belongs to the choline/ethanolamine kinase family. In terms of assembly, homodimer. A small proportion exists as higher oligomers. The cofactor is Mg(2+).

It catalyses the reaction choline + ATP = phosphocholine + ADP + H(+). It carries out the reaction ethanolamine + ATP = phosphoethanolamine + ADP + H(+). It participates in phospholipid metabolism; phosphatidylcholine biosynthesis; phosphocholine from choline: step 1/1. It functions in the pathway phospholipid metabolism; phosphatidylethanolamine biosynthesis; phosphatidylethanolamine from ethanolamine: step 1/3. Its activity is regulated as follows. Inhibited by Ca(2+). Mild inhibition by high levels of Mg(2+)(&gt;10 mM). Catalyzes the first step in phosphatidylcholine biosynthesis. May contribute to phosphatidylethanolamine biosynthesis. Phosphorylates choline and ethanolamine but the activity is much higher with choline. In Caenorhabditis elegans, this protein is Choline kinase A2.